A 203-amino-acid polypeptide reads, in one-letter code: Cytochrome c oxidase assembly protein CtaG (203 aa).

Over 1–16 (MADQQEKDQKLKKQQR) the chain is Cytoplasmic. Residues 17–39 (SNATIAFACLSFFVCMIGAAYAS) form a helical; Signal-anchor for type II membrane protein membrane-spanning segment. The Periplasmic portion of the chain corresponds to 40–203 (VPLYRIFCQV…VKAETPTNGS (164 aa)).

It belongs to the COX11/CtaG family.

It is found in the cell inner membrane. In terms of biological role, exerts its effect at some terminal stage of cytochrome c oxidase synthesis, probably by being involved in the insertion of the copper B into subunit I. This is Cytochrome c oxidase assembly protein CtaG from Brucella anthropi (strain ATCC 49188 / DSM 6882 / CCUG 24695 / JCM 21032 / LMG 3331 / NBRC 15819 / NCTC 12168 / Alc 37) (Ochrobactrum anthropi).